The chain runs to 529 residues: Na(+)/H(+) antiporter NhaB (529 aa).

12 consecutive transmembrane segments (helical) span residues 13–33 (FLGK…IINP), 34–54 (IVFF…EFIF), 90–110 (LVAN…IYFM), 113–133 (LLLF…ILSL), 149–166 (LTVI…YSIY), 205–225 (LLMH…VGEP), 241–261 (FLIR…LTCF), 306–326 (GLIA…VGLI), 327–347 (GLSV…HSLG), 351–371 (EEAL…AVII), 451–471 (ATPN…APLI), and 479–499 (VIMA…GIVF).

Belongs to the NhaB Na(+)/H(+) (TC 2.A.34) antiporter family.

It is found in the cell inner membrane. The enzyme catalyses 2 Na(+)(in) + 3 H(+)(out) = 2 Na(+)(out) + 3 H(+)(in). In terms of biological role, na(+)/H(+) antiporter that extrudes sodium in exchange for external protons. This Vibrio vulnificus (strain YJ016) protein is Na(+)/H(+) antiporter NhaB.